The primary structure comprises 172 residues: Large ribosomal subunit protein uL10 (172 aa).

Belongs to the universal ribosomal protein uL10 family. Part of the ribosomal stalk of the 50S ribosomal subunit. The N-terminus interacts with L11 and the large rRNA to form the base of the stalk. The C-terminus forms an elongated spine to which L12 dimers bind in a sequential fashion forming a multimeric L10(L12)X complex.

In terms of biological role, forms part of the ribosomal stalk, playing a central role in the interaction of the ribosome with GTP-bound translation factors. The chain is Large ribosomal subunit protein uL10 from Nitrobacter hamburgensis (strain DSM 10229 / NCIMB 13809 / X14).